A 355-amino-acid chain; its full sequence is N-acylethanolamine-hydrolyzing acid amidase (355 aa).

Positions 1 to 17 are cleaved as a signal peptide; that stretch reads MLLLQIILLLLPVICSA. Catalysis depends on Cys-122, which acts as the Nucleophile. N-linked (GlcNAc...) asparagine glycosylation is found at Asn-150, Asn-160, and Asn-328.

This sequence belongs to the acid ceramidase family. Heterodimer of an alpha and a beta subunit, produced by autocatalytic cleavage. Post-translationally, N-glycosylated. In terms of processing, autoproteolytic cleavage at pH 4.5 gives rise to the alpha and beta subunit. Cleavage gives rise to a conformation change that activates the enzyme. The same catalytic Cys residue mediates the autoproteolytic cleavage and subsequent hydrolysis of lipid substrates.

It is found in the lysosome. It localises to the membrane. It catalyses the reaction N-hexadecanoylethanolamine + H2O = ethanolamine + hexadecanoate. It carries out the reaction an N-(long-chain fatty acyl)ethanolamine + H2O = a long-chain fatty acid + ethanolamine. Its pathway is lipid metabolism; fatty acid metabolism. Degrades bioactive fatty acid amides, such as N-palmitoylethanolamine, to ethanolamine and free fatty acids. This Caenorhabditis elegans protein is N-acylethanolamine-hydrolyzing acid amidase.